Consider the following 408-residue polypeptide: Neutral cholesterol ester hydrolase 1 (408 aa).

The Cytoplasmic segment spans residues methionine 1–serine 4. The chain crosses the membrane as a helical; Signal-anchor for type II membrane protein span at residues cysteine 5–serine 25. Residues serine 26–leucine 408 are Lumenal-facing. The Involved in the stabilization of the negatively charged intermediate by the formation of the oxyanion hole signature appears at histidine 113–glycine 115. Residue serine 191 is part of the active site. Residues asparagine 270 and asparagine 287 are each glycosylated (N-linked (GlcNAc...) asparagine). Residues aspartate 348 and histidine 378 contribute to the active site. Asparagine 389 carries N-linked (GlcNAc...) asparagine glycosylation.

Belongs to the 'GDXG' lipolytic enzyme family. Post-translationally, N-glycosylated.

Its subcellular location is the cell membrane. It is found in the microsome. The enzyme catalyses a 1-O-alkyl-2-acetyl-sn-glycerol + H2O = a 1-O-alkyl-sn-glycerol + acetate + H(+). It carries out the reaction 1-O-hexadecyl-2-acetyl-sn-glycerol + H2O = 1-O-hexadecyl-sn-glycerol + acetate + H(+). It catalyses the reaction a cholesterol ester + H2O = cholesterol + a fatty acid + H(+). The catalysed reaction is cholesteryl (9Z-octadecenoate) + H2O = cholesterol + (9Z)-octadecenoate + H(+). Its function is as follows. Hydrolyzes 2-acetyl monoalkylglycerol ether (1-O-alkyl-2-acetyl-sn-glycerol), the penultimate precursor of the pathway for de novo synthesis of platelet-activating factor. May be responsible for the hydrolysis of cholesterol esters (such as cholesteryl (9Z-octadecenoate)) in macrophages. Also involved in organ detoxification by hydrolyzing exogenous organophosphorus compounds. This chain is Neutral cholesterol ester hydrolase 1 (NCEH1), found in Bos taurus (Bovine).